Reading from the N-terminus, the 170-residue chain is Group 2 truncated hemoglobin 3-1 (170 aa).

H98 provides a ligand contact to heme b.

Belongs to the truncated hemoglobin family. Group II subfamily. As to quaternary structure, homodimer when ferric.

Hemoglobin-like protein that exhibits an unusual concentration-independent binding of O(2) and CO. Required for general plant development and during nodulation. May promote shoot organogenesis from root explants. The protein is Group 2 truncated hemoglobin 3-1 of Medicago truncatula (Barrel medic).